We begin with the raw amino-acid sequence, 204 residues long: Casparian strip membrane protein 2 (204 aa).

The Cytoplasmic segment spans residues 1–42 (MKNESTFIDVPAESSSAMKGKAPLIGVARDHTTSGSGGYNRG). A helical transmembrane segment spans residues 43 to 63 (LAIFDFLLRLAAIVAALAAAA). Topologically, residues 64-92 (TMGTSDETLPFFTQFLQFEASYDDLPTFQ) are extracellular. A helical membrane pass occupies residues 93 to 113 (FFVIAMALVGGYLVLSLPISV). Over 114-125 (VTILRPLATAPR) the chain is Cytoplasmic. A helical membrane pass occupies residues 126 to 146 (LLLLVLDTGVLALNTAAASSA). Over 147 to 178 (AAISYLAHSGNQNTNWLPICQQFGDFCQKSSG) the chain is Extracellular. The helical transmembrane segment at 179–199 (AVVSAFVSVVFFTILVVISGV) threads the bilayer. Residues 200–204 (ALKRH) lie on the Cytoplasmic side of the membrane.

Belongs to the Casparian strip membrane proteins (CASP) family. In terms of assembly, homodimer and heterodimers with other CASP proteins. Interacts with CASP1, CASP3 and CASP4.

It localises to the cell membrane. Functionally, regulates membrane-cell wall junctions and localized cell wall deposition. Required for establishment of the Casparian strip membrane domain (CSD) and the subsequent formation of Casparian strips, a cell wall modification of the root endodermis that determines an apoplastic barrier between the intraorganismal apoplasm and the extraorganismal apoplasm and prevents lateral diffusion. The polypeptide is Casparian strip membrane protein 2 (CASP2) (Arabidopsis thaliana (Mouse-ear cress)).